A 278-amino-acid polypeptide reads, in one-letter code: Bifunctional protein FolD (278 aa).

NADP(+)-binding positions include 165 to 167, Ser-190, and Thr-231; that span reads GRS.

The protein belongs to the tetrahydrofolate dehydrogenase/cyclohydrolase family. In terms of assembly, homodimer.

The enzyme catalyses (6R)-5,10-methylene-5,6,7,8-tetrahydrofolate + NADP(+) = (6R)-5,10-methenyltetrahydrofolate + NADPH. It catalyses the reaction (6R)-5,10-methenyltetrahydrofolate + H2O = (6R)-10-formyltetrahydrofolate + H(+). The protein operates within one-carbon metabolism; tetrahydrofolate interconversion. Catalyzes the oxidation of 5,10-methylenetetrahydrofolate to 5,10-methenyltetrahydrofolate and then the hydrolysis of 5,10-methenyltetrahydrofolate to 10-formyltetrahydrofolate. In Clostridium novyi (strain NT), this protein is Bifunctional protein FolD.